Here is a 639-residue protein sequence, read N- to C-terminus: Chaperone protein DnaK (639 aa).

Thr198 is subject to Phosphothreonine; by autocatalysis. The segment at 605-624 (SQAQGGAETNAGKQANAAAD) is disordered.

The protein belongs to the heat shock protein 70 family.

Its function is as follows. Acts as a chaperone. This is Chaperone protein DnaK from Shewanella putrefaciens (strain CN-32 / ATCC BAA-453).